A 145-amino-acid polypeptide reads, in one-letter code: UPF0299 membrane protein plu1549 (145 aa).

The next 4 helical transmembrane spans lie at valine 6–threonine 26, leucine 34–phenylalanine 54, glycine 65–methionine 85, and isoleucine 95–tyrosine 115.

It belongs to the UPF0299 family.

The protein localises to the cell inner membrane. The sequence is that of UPF0299 membrane protein plu1549 from Photorhabdus laumondii subsp. laumondii (strain DSM 15139 / CIP 105565 / TT01) (Photorhabdus luminescens subsp. laumondii).